The chain runs to 333 residues: MNKLITIERHFVEEQKLNPDATGELTDLLYDVAFAAKLVRREVVRAGLVDILGMAGTTNVQGEEVKKLDLFANDKIINAIGQHGRFALMGSEENEGTIIPPKNESGKYVLLFDPLDGSSNIDVNVSVGTIFSIYRLTGDDPSKADINDCLQKGSQQVAAGYVIYGSSVVMVYTTGHGVHGFTYDPTIGEFLLSHENITTPKQGKYYSINEGSRKQFNDSTVNYINYLKEEDAETGRPYSTRYIGSLVADFHRNLLTGGVFVYPATKQHRNGKLRLMYEANPLAFICEQAGGRATNGSERILDIDPSELHQRTPLYIGSEEDVIIAEEFEQGKR.

The Mg(2+) site is built by Glu92, Asp113, Leu115, and Asp116. Substrate is bound by residues 116–119, Asn209, Tyr242, and Lys272; that span reads DGSS. Glu278 contributes to the Mg(2+) binding site.

The protein belongs to the FBPase class 1 family. Homotetramer. The cofactor is Mg(2+).

The protein resides in the cytoplasm. The catalysed reaction is beta-D-fructose 1,6-bisphosphate + H2O = beta-D-fructose 6-phosphate + phosphate. It participates in carbohydrate biosynthesis; Calvin cycle. The sequence is that of Fructose-1,6-bisphosphatase class 1 from Chlorobium phaeobacteroides (strain BS1).